The chain runs to 112 residues: Keratin-associated protein 12-4 (112 aa).

15 repeat units span residues 10–14 (CPMAC), 20–24 (CVPST), 25–29 (CYPPE), 35–39 (CCCSA), 41–45 (CVALL), 46–50 (CRPLC), 56–60 (CQPAC), 61–65 (CVPSP), 66–70 (CQVAC), 71–75 (CVPVS), 76–80 (CKPVL), 81–85 (CVASF), 86–90 (CPTSG), 91–95 (CCQPF), and 96–100 (CPTLV). The segment at 10-100 (CPMACPGSPC…CCQPFCPTLV (91 aa)) is 15 X 5 AA approximate repeats.

It belongs to the KRTAP type 12 family. Interacts with hair keratins. In terms of tissue distribution, restricted to a narrow region of the hair fiber cuticle, lying approximately 20 cell layers above the apex of the dermal papilla of the hair root; not detected in any other tissues.

In terms of biological role, in the hair cortex, hair keratin intermediate filaments are embedded in an interfilamentous matrix, consisting of hair keratin-associated proteins (KRTAP), which are essential for the formation of a rigid and resistant hair shaft through their extensive disulfide bond cross-linking with abundant cysteine residues of hair keratins. The matrix proteins include the high-sulfur and high-glycine-tyrosine keratins. The polypeptide is Keratin-associated protein 12-4 (KRTAP12-4) (Homo sapiens (Human)).